A 540-amino-acid chain; its full sequence is T-complex protein 1 subunit alpha (540 aa).

The protein belongs to the TCP-1 chaperonin family. As to quaternary structure, component of the T-complex protein 1 (TCP1) complex.

It is found in the cytoplasm. In terms of biological role, molecular chaperone; assists the folding of proteins upon ATP hydrolysis. This is T-complex protein 1 subunit alpha (TCP1) from Encephalitozoon cuniculi (strain GB-M1) (Microsporidian parasite).